Here is a 367-residue protein sequence, read N- to C-terminus: Flagellar P-ring protein (367 aa).

A signal peptide spans 1–18 (MFRALITALFCFSGLALA).

Belongs to the FlgI family. In terms of assembly, the basal body constitutes a major portion of the flagellar organelle and consists of four rings (L,P,S, and M) mounted on a central rod.

Its subcellular location is the periplasm. It is found in the bacterial flagellum basal body. Functionally, assembles around the rod to form the L-ring and probably protects the motor/basal body from shearing forces during rotation. This Rhizorhabdus wittichii (strain DSM 6014 / CCUG 31198 / JCM 15750 / NBRC 105917 / EY 4224 / RW1) (Sphingomonas wittichii) protein is Flagellar P-ring protein.